The chain runs to 266 residues: uncharacterized protein (266 aa).

The next 4 membrane-spanning stretches (helical) occupy residues 9–29 (IFIIFLSFLMIVLSITSIELP), 79–99 (GIMTCMGINILSLVIILINPF), 122–142 (LSVMIVIFYILSTTIGLMLSG), and 193–213 (GWYLSIVLLFLSLILAVMVFI).

The protein localises to the membrane. This is an uncharacterized protein from Dictyostelium discoideum (Social amoeba).